The primary structure comprises 406 residues: Dual-specificity RNA methyltransferase RlmN (406 aa).

The active-site Proton acceptor is E121. Positions 127–377 (ERDRGTLCVS…VRTPRGRDIL (251 aa)) constitute a Radical SAM core domain. A disulfide bridge connects residues C134 and C380. [4Fe-4S] cluster-binding residues include C141, C145, and C148. S-adenosyl-L-methionine-binding positions include 206 to 207 (GE), S238, 260 to 262 (SLH), and N337. The S-methylcysteine intermediate role is filled by C380.

Belongs to the radical SAM superfamily. RlmN family. It depends on [4Fe-4S] cluster as a cofactor.

It is found in the cytoplasm. The enzyme catalyses adenosine(2503) in 23S rRNA + 2 reduced [2Fe-2S]-[ferredoxin] + 2 S-adenosyl-L-methionine = 2-methyladenosine(2503) in 23S rRNA + 5'-deoxyadenosine + L-methionine + 2 oxidized [2Fe-2S]-[ferredoxin] + S-adenosyl-L-homocysteine. It catalyses the reaction adenosine(37) in tRNA + 2 reduced [2Fe-2S]-[ferredoxin] + 2 S-adenosyl-L-methionine = 2-methyladenosine(37) in tRNA + 5'-deoxyadenosine + L-methionine + 2 oxidized [2Fe-2S]-[ferredoxin] + S-adenosyl-L-homocysteine. Specifically methylates position 2 of adenine 2503 in 23S rRNA and position 2 of adenine 37 in tRNAs. m2A2503 modification seems to play a crucial role in the proofreading step occurring at the peptidyl transferase center and thus would serve to optimize ribosomal fidelity. The protein is Dual-specificity RNA methyltransferase RlmN of Azorhizobium caulinodans (strain ATCC 43989 / DSM 5975 / JCM 20966 / LMG 6465 / NBRC 14845 / NCIMB 13405 / ORS 571).